The primary structure comprises 305 residues: Mitochondrial citrate transporter D (305 aa).

3 Solcar repeats span residues L10–F101, Q111–Q197, and R211–F298. A run of 6 helical transmembrane segments spans residues F16–V36, S78–W98, L118–V137, T176–A196, Q208–N228, and L270–V291.

The protein belongs to the mitochondrial carrier (TC 2.A.29) family.

Its subcellular location is the mitochondrion inner membrane. It catalyses the reaction citrate(in) + H(+)(in) = citrate(out) + H(+)(out). In terms of biological role, mitochondrial transporter that mediates citrate export from mitochondria to cytoplasm. Both ctpA, ctpB, and ctpD play important roles in citric acid transport across the mitochondrial membrane and function in a redundant manner. In Aspergillus niger (strain ATCC 1015 / CBS 113.46 / FGSC A1144 / LSHB Ac4 / NCTC 3858a / NRRL 328 / USDA 3528.7), this protein is Mitochondrial citrate transporter D.